Consider the following 270-residue polypeptide: Dermonecrotic toxin LhSicTox-alphaIA2aiii (270 aa).

The active site involves histidine 2. Mg(2+)-binding residues include glutamate 22 and aspartate 24. The active-site Nucleophile is histidine 38. 2 disulfides stabilise this stretch: cysteine 42–cysteine 48 and cysteine 44–cysteine 187. Aspartate 82 is a binding site for Mg(2+).

The protein belongs to the arthropod phospholipase D family. Class II subfamily. The cofactor is Mg(2+). In terms of tissue distribution, expressed by the venom gland.

Its subcellular location is the secreted. It catalyses the reaction an N-(acyl)-sphingosylphosphocholine = an N-(acyl)-sphingosyl-1,3-cyclic phosphate + choline. The catalysed reaction is an N-(acyl)-sphingosylphosphoethanolamine = an N-(acyl)-sphingosyl-1,3-cyclic phosphate + ethanolamine. It carries out the reaction a 1-acyl-sn-glycero-3-phosphocholine = a 1-acyl-sn-glycero-2,3-cyclic phosphate + choline. The enzyme catalyses a 1-acyl-sn-glycero-3-phosphoethanolamine = a 1-acyl-sn-glycero-2,3-cyclic phosphate + ethanolamine. Dermonecrotic toxins cleave the phosphodiester linkage between the phosphate and headgroup of certain phospholipids (sphingolipid and lysolipid substrates), forming an alcohol (often choline) and a cyclic phosphate. This toxin acts on sphingomyelin (SM). It may also act on ceramide phosphoethanolamine (CPE), lysophosphatidylcholine (LPC) and lysophosphatidylethanolamine (LPE), but not on lysophosphatidylserine (LPS), and lysophosphatidylglycerol (LPG). It acts by transphosphatidylation, releasing exclusively cyclic phosphate products as second products. Induces dermonecrosis, hemolysis, increased vascular permeability, edema, inflammatory response, and platelet aggregation. In Loxosceles hirsuta (Recluse spider), this protein is Dermonecrotic toxin LhSicTox-alphaIA2aiii.